The sequence spans 393 residues: ATP phosphoribosyltransferase regulatory subunit (393 aa).

This sequence belongs to the class-II aminoacyl-tRNA synthetase family. HisZ subfamily. As to quaternary structure, heteromultimer composed of HisG and HisZ subunits.

It is found in the cytoplasm. Its pathway is amino-acid biosynthesis; L-histidine biosynthesis; L-histidine from 5-phospho-alpha-D-ribose 1-diphosphate: step 1/9. In terms of biological role, required for the first step of histidine biosynthesis. May allow the feedback regulation of ATP phosphoribosyltransferase activity by histidine. This chain is ATP phosphoribosyltransferase regulatory subunit, found in Nitrosospira multiformis (strain ATCC 25196 / NCIMB 11849 / C 71).